The primary structure comprises 425 residues: ATP-dependent RNA helicase RhlB (425 aa).

The Q motif motif lies at 9–37 (TRFADLALHPKIQQAISSAGFEYCTPIQA). Residues 40–218 (LPVALSNRDV…YEHMNAPTKL (179 aa)) enclose the Helicase ATP-binding domain. 53 to 60 (AQTGTGKT) provides a ligand contact to ATP. The short motif at 164 to 167 (DEAD) is the DEAD box element. One can recognise a Helicase C-terminal domain in the interval 242–389 (KFPLLLTLIE…VTKYDGDALL (148 aa)). The interval 391 to 425 (DLRRPRPIQRRRRHNSGGGKGKPRGRRSGPPRNAS) is disordered. Over residues 395 to 419 (PRPIQRRRRHNSGGGKGKPRGRRSG) the composition is skewed to basic residues.

The protein belongs to the DEAD box helicase family. RhlB subfamily. Component of the RNA degradosome, which is a multiprotein complex involved in RNA processing and mRNA degradation.

The protein resides in the cytoplasm. It carries out the reaction ATP + H2O = ADP + phosphate + H(+). DEAD-box RNA helicase involved in RNA degradation. Has RNA-dependent ATPase activity and unwinds double-stranded RNA. This chain is ATP-dependent RNA helicase RhlB, found in Idiomarina loihiensis (strain ATCC BAA-735 / DSM 15497 / L2-TR).